We begin with the raw amino-acid sequence, 907 residues long: Polyphosphoinositide phosphatase (907 aa).

The SAC domain maps to 154–547 (FQNVDLSSNF…GDTLSLQYGG (394 aa)). A disordered region spans residues 707 to 788 (GIDPSPFTVR…VKMTDAGDSA (82 aa)). Residues 758 to 770 (SEDDSGTDREEEG) show a composition bias toward acidic residues.

As to quaternary structure, component of the PI(3,5)P2 regulatory complex/PAS complex, at least composed of PIKFYVE, FIG4 and VAC14. VAC14 nucleates the assembly of the complex and serves as a scaffold by pentamerizing into a star-shaped structure, which can bind a single copy each of PIKFYVE and FIG4 and coordinates their activities.

It localises to the endosome membrane. It carries out the reaction a 1,2-diacyl-sn-glycero-3-phospho-(1D-myo-inositol-3,5-bisphosphate) + H2O = a 1,2-diacyl-sn-glycero-3-phospho-(1D-myo-inositol-3-phosphate) + phosphate. The enzyme catalyses a 1,2-diacyl-sn-glycero-3-phospho-(1D-myo-inositol-4,5-bisphosphate) + H2O = a 1,2-diacyl-sn-glycero-3-phospho-(1D-myo-inositol 4-phosphate) + phosphate. It catalyses the reaction a 1,2-diacyl-sn-glycero-3-phospho-(1D-myo-inositol-3,4,5-trisphosphate) + H2O = a 1,2-diacyl-sn-glycero-3-phospho-(1D-myo-inositol-3,4-bisphosphate) + phosphate. The catalysed reaction is O-phospho-L-seryl-[protein] + H2O = L-seryl-[protein] + phosphate. Dual specificity phosphatase component of the PI(3,5)P2 regulatory complex which regulates both the synthesis and turnover of phosphatidylinositol 3,5-bisphosphate (PtdIns(3,5)P2). Catalyzes the dephosphorylation of phosphatidylinositol 3,5-bisphosphate (PtdIns(3,5)P2) to form phosphatidylinositol 3-phosphate. Has serine-protein phosphatase activity acting on PIKfyve to stimulate its lipid kinase activity, its catalytically activity being required for maximal PI(3,5)P2 production. In vitro, hydrolyzes all three D5-phosphorylated polyphosphoinositide and although displaying preferences for PtdIns(3,5)P2, it is capable of hydrolyzing PtdIns(3,4,5)P3 and PtdIns(4,5)P2, at least in vitro. The polypeptide is Polyphosphoinositide phosphatase (Homo sapiens (Human)).